Reading from the N-terminus, the 319-residue chain is Super small secreted glycoprotein (319 aa).

The N-terminal stretch at 1-32 (MGGLSLLQLPRDKFRKSSFFVWVIILFQKAFS) is a signal peptide. An N-linked (GlcNAc...) asparagine; by host glycan is attached at Asn40. Cystine bridges form between Cys108-Cys135 and Cys121-Cys147. Asn204, Asn208, Asn238, Asn257, and Asn268 each carry an N-linked (GlcNAc...) asparagine; by host glycan.

Belongs to the filoviruses glycoprotein family.

The protein localises to the secreted. This Sudan ebolavirus (strain Human/Uganda/Gulu/2000) (SEBOV) protein is Super small secreted glycoprotein (GP).